We begin with the raw amino-acid sequence, 69 residues long: DNA-directed RNA polymerase subunit epsilon (69 aa).

This sequence belongs to the RNA polymerase subunit epsilon family. RNAP is composed of a core of 2 alpha, a beta and a beta' subunit. The core is associated with a delta subunit, and at least one of epsilon or omega. When a sigma factor is associated with the core the holoenzyme is formed, which can initiate transcription.

It carries out the reaction RNA(n) + a ribonucleoside 5'-triphosphate = RNA(n+1) + diphosphate. In terms of biological role, a non-essential component of RNA polymerase (RNAP). In Bacillus velezensis (strain DSM 23117 / BGSC 10A6 / LMG 26770 / FZB42) (Bacillus amyloliquefaciens subsp. plantarum), this protein is DNA-directed RNA polymerase subunit epsilon.